A 509-amino-acid polypeptide reads, in one-letter code: GMP synthase [glutamine-hydrolyzing] (509 aa).

The 190-residue stretch at 4 to 193 (NVLILDFGSQ…LVKIAQVPQN (190 aa)) folds into the Glutamine amidotransferase type-1 domain. Cysteine 79 (nucleophile) is an active-site residue. Active-site residues include histidine 167 and glutamate 169. The GMPS ATP-PPase domain occupies 194-384 (FTPNAFVSDM…LGIDAELLGR (191 aa)). 221 to 227 (SGGVDST) serves as a coordination point for ATP.

As to quaternary structure, homodimer.

The catalysed reaction is XMP + L-glutamine + ATP + H2O = GMP + L-glutamate + AMP + diphosphate + 2 H(+). The protein operates within purine metabolism; GMP biosynthesis; GMP from XMP (L-Gln route): step 1/1. Functionally, catalyzes the synthesis of GMP from XMP. This chain is GMP synthase [glutamine-hydrolyzing], found in Flavobacterium psychrophilum (strain ATCC 49511 / DSM 21280 / CIP 103535 / JIP02/86).